The following is a 224-amino-acid chain: MVKVKFLGHAAFLIEGSKKILIDPFLSGNPKAAVKPEEVEADLILVTHAHGDHIGDAIEIARRSGAKIVAMYDIANYISQKASDVETIGMNYGPTTIDGVFIVQVPAWHSSSDGVHNIGNPCGYIVKLDGVTIYHAGDTFVFGDMALFNELYGPIDVALLPIGGHFTMGPREAAKAVELLKPRKVVPMHYNTWPPIAQDPEEFKRLVGDKAEVVILQPGEELEL.

The protein belongs to the UPF0173 family.

This chain is UPF0173 metal-dependent hydrolase TK0141, found in Thermococcus kodakarensis (strain ATCC BAA-918 / JCM 12380 / KOD1) (Pyrococcus kodakaraensis (strain KOD1)).